We begin with the raw amino-acid sequence, 272 residues long: MKTLNHLNKMKASQQKISMVTAYDYPSAKQAQQAEIDMILVGDSLGMTVLGYDSTVQVTLNDMIHHGKAVKRGASDTFIVVDMPIGTVGLSDEEDLKNALKLYQNTNANAVKVEGAHLTSFIQKATKMGIPVVSHLGLTPQSVGVMGYKLQGDTKTAAMQLIKDAKAMETAGAVVLVLEAIPSDLAREISQQLTIPVIGIGAGKDTDGQVLVYHDMLNYGVDRHAKFVKQFADFSSGIDGLRQYNEEVKAGTFPSENHTYKKRIMDEVEQHD.

The Mg(2+) site is built by Asp-43 and Asp-82. Residues 43–44, Asp-82, and Lys-112 each bind 3-methyl-2-oxobutanoate; that span reads DS. Glu-114 lines the Mg(2+) pocket. Glu-179 acts as the Proton acceptor in catalysis.

This sequence belongs to the PanB family. In terms of assembly, homodecamer; pentamer of dimers. Mg(2+) is required as a cofactor.

Its subcellular location is the cytoplasm. The enzyme catalyses 3-methyl-2-oxobutanoate + (6R)-5,10-methylene-5,6,7,8-tetrahydrofolate + H2O = 2-dehydropantoate + (6S)-5,6,7,8-tetrahydrofolate. Its pathway is cofactor biosynthesis; (R)-pantothenate biosynthesis; (R)-pantoate from 3-methyl-2-oxobutanoate: step 1/2. Catalyzes the reversible reaction in which hydroxymethyl group from 5,10-methylenetetrahydrofolate is transferred onto alpha-ketoisovalerate to form ketopantoate. The polypeptide is 3-methyl-2-oxobutanoate hydroxymethyltransferase (Staphylococcus epidermidis (strain ATCC 35984 / DSM 28319 / BCRC 17069 / CCUG 31568 / BM 3577 / RP62A)).